The sequence spans 389 residues: Putative F-box protein At3g10240 (389 aa).

The segment at 1–26 (MEQQEEKRKIKAYQRKSKRSKSGSSS) is disordered. Over residues 9–21 (KIKAYQRKSKRSK) the composition is skewed to basic residues. The 46-residue stretch at 21–66 (KSGSSSIPLDLVSEILLRLPEKSVARFRCVSKPWSSITTEPYFINL) folds into the F-box domain.

The chain is Putative F-box protein At3g10240 from Arabidopsis thaliana (Mouse-ear cress).